Here is a 242-residue protein sequence, read N- to C-terminus: Protein odd-skipped-related 1 (242 aa).

3 C2H2-type zinc fingers span residues 128-150 (FICK…ERTH), 156-178 (FHCE…KYIH), and 184-207 (HKCE…SCHH).

It belongs to the Odd C2H2-type zinc-finger protein family.

The protein localises to the nucleus. Its function is as follows. May function as transcription regulator. Essential for larval development. Required for morphogenesis and function of the digestive tract. This is Protein odd-skipped-related 1 from Caenorhabditis elegans.